Reading from the N-terminus, the 128-residue chain is Sulfurtransferase TusD (128 aa).

Cysteine 78 acts as the Cysteine persulfide intermediate in catalysis.

It belongs to the DsrE/TusD family. Heterohexamer, formed by a dimer of trimers. The hexameric TusBCD complex contains 2 copies each of TusB, TusC and TusD. The TusBCD complex interacts with TusE.

The protein localises to the cytoplasm. In terms of biological role, part of a sulfur-relay system required for 2-thiolation of 5-methylaminomethyl-2-thiouridine (mnm(5)s(2)U) at tRNA wobble positions. Accepts sulfur from TusA and transfers it in turn to TusE. The chain is Sulfurtransferase TusD from Escherichia coli O127:H6 (strain E2348/69 / EPEC).